We begin with the raw amino-acid sequence, 512 residues long: Bestrophin-2 (512 aa).

The Cytoplasmic segment spans residues 1-31 (MTVTYTARVAKARFGGFSKLLLLWRGSIYKL). A10 is a Ca(2+) binding site. The chain crosses the membrane as a helical span at residues 32 to 51 (LWRELLCFLGLFMALSAAYR). Over 52–60 (FVLTEEQKR) the chain is Extracellular. The helical transmembrane segment at 61–82 (YFEKLVLYCDRYASLIPVSFVL) threads the bilayer. At 83–238 (GFYVTLVVHR…WISVPLVYTQ (156 aa)) the chain is on the cytoplasmic side. The chain crosses the membrane as a helical span at residues 239 to 255 (VVTIAVYSYFLACLIGR). Residues 256–274 (QFLDPAQGYKDHDLDLCVP) are Extracellular-facing. A helical membrane pass occupies residues 275 to 288 (IFTLLQFFFYAGWL). The Cytoplasmic segment spans residues 289–512 (KVAEQLINPF…PIGEEEESLA (224 aa)). Residues Q293, N296, D301, and D304 each contribute to the Ca(2+) site. Residues 453–512 (VDLGQPEPESEPITGPESPALVPAPRAPSEPLTVVPLSGTRGPAPPWLPSPIGEEEESLA) form a disordered region.

The protein belongs to the anion channel-forming bestrophin (TC 1.A.46) family. Calcium-sensitive chloride channel subfamily. Pentamer. Interacts with GLUL; this interaction tethers a fraction of GLUL to the membrane, causing a decrease of cytosolic glutamine synthase (GS) activity and inhibits the chloride channel activity of BEST2 by affecting the gating at the aperture in the absence of intracellular glutamate.

The protein resides in the cell membrane. It localises to the basolateral cell membrane. It carries out the reaction chloride(in) = chloride(out). It catalyses the reaction iodide(out) = iodide(in). The enzyme catalyses hydrogencarbonate(in) = hydrogencarbonate(out). The catalysed reaction is L-glutamate(out) = L-glutamate(in). It carries out the reaction L-glutamine(out) = L-glutamine(in). Its activity is regulated as follows. Chloride channel activity is allosterically inhibited by GLUL/glutamine synthase (GS) which affects the gating at the aperture in the absence of intracellular glutamate. Inhibitory effect of GLUL is relieved upon increasing of intracellular level of L-glutamate. In terms of biological role, ligand-gated anion channel that allows the movement of anions across cell membranes when activated by calcium (Ca2+). Transports a large specter of anions, namely mediates the movement of chloride, L-glutamate and iodide. Calcium-binding triggers the dilation of the aperture, but calcium-dependent gating is only effective when the size of the passing anion is bigger than the closed aperture. Mediates the calcium-activated hydrogencarbonate movement and participates in colonic hydrogencarbonate secretion concomitant with mucin secretion. In non-pigmented epithelium (NPE), mediates the efflux of intracellular L-glutamate; binding of intracellular L-glutamate activates and open both the neck and the aperture of the channel, leading to L-glutamate exit promoting chloride influx movement from the extracellular side in trans. Also exhibits a directional permeability for intracellular glutamine, in a similar manner as for L-glutamate. The polypeptide is Bestrophin-2 (Bos taurus (Bovine)).